Reading from the N-terminus, the 337-residue chain is DNA-directed RNA polymerase subunit alpha (337 aa).

The alpha N-terminal domain (alpha-NTD) stretch occupies residues 1–233 (MVREEIAEST…DLFVPFLHAE (233 aa)). Residues 266 to 337 (GIPLKYIFID…FAVDLPKVLI (72 aa)) form an alpha C-terminal domain (alpha-CTD) region.

Belongs to the RNA polymerase alpha chain family. As to quaternary structure, in plastids the minimal PEP RNA polymerase catalytic core is composed of four subunits: alpha, beta, beta', and beta''. When a (nuclear-encoded) sigma factor is associated with the core the holoenzyme is formed, which can initiate transcription.

It localises to the plastid. Its subcellular location is the chloroplast. The enzyme catalyses RNA(n) + a ribonucleoside 5'-triphosphate = RNA(n+1) + diphosphate. Its function is as follows. DNA-dependent RNA polymerase catalyzes the transcription of DNA into RNA using the four ribonucleoside triphosphates as substrates. The sequence is that of DNA-directed RNA polymerase subunit alpha from Dioscorea elephantipes (Elephant's foot yam).